Here is a 304-residue protein sequence, read N- to C-terminus: Killer cell immunoglobulin-like receptor 2DS5 (304 aa).

An N-terminal signal peptide occupies residues 1–21 (MSLMVISMACVAFFLLQGAWP). Residues 22–245 (HEGFRRKPSL…SETGNPRHLH (224 aa)) lie on the Extracellular side of the membrane. Ig-like C2-type domains follow at residues 42 to 107 (EETV…VTHS) and 142 to 205 (GESV…FRDS). 2 disulfide bridges follow: Cys-49–Cys-100 and Cys-149–Cys-198. N-linked (GlcNAc...) asparagine glycosylation is found at Asn-67, Asn-84, Asn-178, and Asn-223. The chain crosses the membrane as a helical span at residues 246 to 264 (VLIGTSVVKLPFTILLFFL). Topologically, residues 265 to 304 (LHRWCSNKKNASVMDQGPAGNRTVNREDSDEQDHQEVSYA) are cytoplasmic. The segment at 275–304 (ASVMDQGPAGNRTVNREDSDEQDHQEVSYA) is disordered. A compositionally biased stretch (basic and acidic residues) spans 288-304 (VNREDSDEQDHQEVSYA).

The protein belongs to the immunoglobulin superfamily. In terms of assembly, interacts with TYROBP. In terms of processing, N-glycosylated, glycosylation varies depending on the allele which alters cell surface expression levels. In terms of tissue distribution, expressed on a discrete subset of peripheral blood NK cells.

It localises to the cell membrane. In terms of biological role, activating natural killer (NK) receptor that recognizes C2 epitopes of HLA-C alleles. Bridging the innate and adaptive immune systems, NK cells express a number of cell surface receptors which either inhibit or stimulate their cytotoxicity. Able to activate NK cells citotoxicity and cytokine production such as IFNG. Receptor functions are attenuated even lost in some alleles, such as KIR2DS5*002 represented in this entry. This Homo sapiens (Human) protein is Killer cell immunoglobulin-like receptor 2DS5.